Reading from the N-terminus, the 676-residue chain is XK-related protein 5 (676 aa).

A run of 7 helical transmembrane segments spans residues 37-57 (WLAL…FLWF), 114-134 (LLEA…VFLA), 140-160 (IVPG…LVSY), 206-226 (VWVL…LVAQ), 239-259 (LFNL…WDSP), 266-286 (SFYL…TDFL), and 294-314 (LWTV…LVIY). 4 disordered regions span residues 336–362 (PIED…DSSS), 372–391 (TSLD…GLGE), 495–538 (LEDN…KEGQ), and 598–661 (PIPG…IQRD). The span at 498–509 (NATTQKPPATQE) shows a compositional bias: polar residues.

It belongs to the XK family.

The protein resides in the cell membrane. The chain is XK-related protein 5 from Mus musculus (Mouse).